We begin with the raw amino-acid sequence, 369 residues long: Aspartate-semialdehyde dehydrogenase (369 aa).

Residues 11–14, 38–39, and Gln75 each bind NADP(+); these read RGMV and TS. Arg104 lines the phosphate pocket. Cys137 functions as the Acyl-thioester intermediate in the catalytic mechanism. Gln164 contacts substrate. Residues 167–168 and Pro195 contribute to the NADP(+) site; that span reads SG. Position 243 (Glu243) interacts with substrate. Lys246 is a phosphate binding site. Position 269 (Arg269) interacts with substrate. The active-site Proton acceptor is the His276. Gln352 provides a ligand contact to NADP(+).

This sequence belongs to the aspartate-semialdehyde dehydrogenase family. Homodimer.

The enzyme catalyses L-aspartate 4-semialdehyde + phosphate + NADP(+) = 4-phospho-L-aspartate + NADPH + H(+). The protein operates within amino-acid biosynthesis; L-lysine biosynthesis via DAP pathway; (S)-tetrahydrodipicolinate from L-aspartate: step 2/4. Its pathway is amino-acid biosynthesis; L-methionine biosynthesis via de novo pathway; L-homoserine from L-aspartate: step 2/3. It functions in the pathway amino-acid biosynthesis; L-threonine biosynthesis; L-threonine from L-aspartate: step 2/5. Its function is as follows. Catalyzes the NADPH-dependent formation of L-aspartate-semialdehyde (L-ASA) by the reductive dephosphorylation of L-aspartyl-4-phosphate. The polypeptide is Aspartate-semialdehyde dehydrogenase (Buchnera aphidicola subsp. Baizongia pistaciae (strain Bp)).